The following is a 127-amino-acid chain: MNQTVKVKKKKKTITLGVVHIRASFNNTIVTFTDIQGNTISSASAGGNGFKGARKATPYAAQVTVDRASEKAKEYGLKTISIRIGGPGAQRESAMRALFGQNFVVTSILDVSSIAHNGVRPPKRRRV.

It belongs to the universal ribosomal protein uS11 family. Part of the 30S ribosomal subunit. Interacts with proteins S7 and S18. Binds to IF-3.

Functionally, located on the platform of the 30S subunit, it bridges several disparate RNA helices of the 16S rRNA. Forms part of the Shine-Dalgarno cleft in the 70S ribosome. The sequence is that of Small ribosomal subunit protein uS11 from Rickettsia rickettsii (strain Iowa).